We begin with the raw amino-acid sequence, 423 residues long: L-cysteine:1D-myo-inositol 2-amino-2-deoxy-alpha-D-glucopyranoside ligase (423 aa).

A Zn(2+)-binding site is contributed by cysteine 43. Residues 43–46 (CGIT), threonine 58, and 81–83 (NVT) each bind L-cysteinyl-5'-AMP. The short motif at 45 to 55 (ITPYDATHMGH) is the 'HIGH' region element. A 'ERGGDP' region motif is present at residues 199–204 (ERGGDP). Tryptophan 240 provides a ligand contact to L-cysteinyl-5'-AMP. Zn(2+) is bound at residue cysteine 244. 262 to 264 (GSD) lines the L-cysteinyl-5'-AMP pocket. Position 269 (histidine 269) interacts with Zn(2+). Valine 295 contributes to the L-cysteinyl-5'-AMP binding site. Positions 301–305 (KMSKS) match the 'KMSKS' region motif.

The protein belongs to the class-I aminoacyl-tRNA synthetase family. MshC subfamily. In terms of assembly, monomer. Requires Zn(2+) as cofactor.

It catalyses the reaction 1D-myo-inositol 2-amino-2-deoxy-alpha-D-glucopyranoside + L-cysteine + ATP = 1D-myo-inositol 2-(L-cysteinylamino)-2-deoxy-alpha-D-glucopyranoside + AMP + diphosphate + H(+). In terms of biological role, catalyzes the ATP-dependent condensation of GlcN-Ins and L-cysteine to form L-Cys-GlcN-Ins. This chain is L-cysteine:1D-myo-inositol 2-amino-2-deoxy-alpha-D-glucopyranoside ligase, found in Renibacterium salmoninarum (strain ATCC 33209 / DSM 20767 / JCM 11484 / NBRC 15589 / NCIMB 2235).